Consider the following 400-residue polypeptide: Na(+)/H(+) antiporter NhaA (400 aa).

Transmembrane regions (helical) follow at residues 10 to 30, 60 to 80, 95 to 115, 126 to 146, 155 to 175, 178 to 198, 218 to 238, 265 to 285, 295 to 315, 334 to 354, and 364 to 384; these read FNLEASGGIVLALAAIAAMII, AHHWINDGLMAVFFFLVGLEL, IILPAGAALGGMIMPAIVYLF, GWAIPAATDIAFALGILSLLG, VFLVSIAIFDDIGAIIIIALF, NDLSLGSLAIAGLCLPFLYLL, VAVLKSGIHATLAGVVLALFI, GILPLFAFANAGISLKGAGFG, IAAGLFIGKQVGVMLMCWLIF, AALLCGVGFTMSLFIGGLAFA, and LGIIMGSIVSGIAGYMMLKAT.

Belongs to the NhaA Na(+)/H(+) (TC 2.A.33) antiporter family.

The protein localises to the cell inner membrane. The enzyme catalyses Na(+)(in) + 2 H(+)(out) = Na(+)(out) + 2 H(+)(in). Its function is as follows. Na(+)/H(+) antiporter that extrudes sodium in exchange for external protons. This chain is Na(+)/H(+) antiporter NhaA, found in Psychrobacter cryohalolentis (strain ATCC BAA-1226 / DSM 17306 / VKM B-2378 / K5).